The following is a 249-amino-acid chain: Proteasome activator complex subunit 1 (249 aa).

A disordered region spans residues 59–102 (APLDIPVPDPVKEKEKEERKKQQEKEEKEEKKKGDEDDKGPPCG). Positions 68 to 98 (PVKEKEKEERKKQQEKEEKEEKKKGDEDDKG) are enriched in basic and acidic residues.

The protein belongs to the PA28 family. As to quaternary structure, heterodimer of PSME1 and PSME2, which forms a hexameric ring. PSME1 can form homoheptamers.

Its function is as follows. Implicated in immunoproteasome assembly and required for efficient antigen processing. The PA28 activator complex enhances the generation of class I binding peptides by altering the cleavage pattern of the proteasome. The chain is Proteasome activator complex subunit 1 (Psme1) from Mus musculus (Mouse).